Reading from the N-terminus, the 253-residue chain is uncharacterized protein (253 aa).

EamA domains follow at residues M1–L97 and F116–L237. 8 helical membrane-spanning segments follow: residues F2–L22, I28–Y48, E53–L73, T80–G100, I101–F121, A138–F158, I162–L182, and G214–I234.

The protein belongs to the EamA transporter family.

It is found in the cell membrane. This is an uncharacterized protein from Acidianus ambivalens (Desulfurolobus ambivalens).